The chain runs to 179 residues: Large ribosomal subunit protein uL6 (179 aa).

The protein belongs to the universal ribosomal protein uL6 family. Part of the 50S ribosomal subunit.

Functionally, this protein binds to the 23S rRNA, and is important in its secondary structure. It is located near the subunit interface in the base of the L7/L12 stalk, and near the tRNA binding site of the peptidyltransferase center. This is Large ribosomal subunit protein uL6 from Acaryochloris marina (strain MBIC 11017).